The sequence spans 241 residues: Probable transcriptional regulatory protein lmo1535 (241 aa).

Polar residues predominate over residues 1 to 14; it reads MSGHSKWNNIQGRK. The interval 1-22 is disordered; that stretch reads MSGHSKWNNIQGRKNAQDSKRS.

The protein belongs to the TACO1 family.

It is found in the cytoplasm. This Listeria monocytogenes serovar 1/2a (strain ATCC BAA-679 / EGD-e) protein is Probable transcriptional regulatory protein lmo1535.